An 892-amino-acid polypeptide reads, in one-letter code: MSQQTTIRKLAELVNTPVEKLLEQLAGAGMKFSGPDQVVTSTEKMKLLGFLRRTHGKSDVSVGTVREAPKKITLNRRRLQEVTVNAGRNKTTVNVEVRQKRTYVKPPESEYHTPTKPPIELADAERVEILRKLEESRQRNLAEQQRLAEVDRQRVEEQERKRREEEQAELERQKTESRVVEEILVKTDSNSVKPVSKPISEERTRALPRTVRPTPAARPSVSRSDDRNSNGGVRHKARGSHVIVSDEDDSARRFAGQMHLTAAERARRGSNTRGKGGGSHRSATHRGNENSIRSSGAHGFERPTVAVVREVAVGDTITVADLAQKLALKSGDMVKALFKMGVMVTITQTIDHDTAVLVSEELGHKVTRASSSDFEDALLAHTEELHGEPVPRPPVVTIMGHVDHGKTSLLDYIRRTKIAVGEAGGITQHIGAYHVETPRGVISFLDTPGHAAFTSMRARGAKITDIVVLVVAADDGVMPQTKEAVQHARAAGVPLIVAVSKIDKSTADPQRVKNELLTESVVAEEFGGDTQFVELSAKTGVGVDALLDAISIQAEVLELKAVIEGRATGTVIESSLDKGRGPVATVLVQQGRLKKGDYLVCGTHYGRVRALFDEVGHQPLAASPSIPVQVLGLSGVPDAGDDFVVVDDERLAKDVAQQREAKRRESRLVTSAGNRMEDILAQMGKGENQQVLNLLIKADVQGSLEALKQALVALSNDDIRINVIHVGVGGITESDANSAVTSKATVIGFNVRADASARKIIEVNGVDLRYFSIIYDVIDQVKQVASGLLGVEIREEIIGVAEVRDVFRSSKFGAVAGCMIIEGVVKRSKPIRVLRDNTVVFEGELESLRRFKENVDEVRNSIECGIGVKAYNDVRVGDSIECFERIEVARTL.

A compositionally biased stretch (basic and acidic residues) spans 138-185 (QRNLAEQQRLAEVDRQRVEEQERKRREEEQAELERQKTESRVVEEILV). 2 disordered regions span residues 138-250 (QRNL…EDDS) and 262-298 (AAERARRGSNTRGKGGGSHRSATHRGNENSIRSSGAH). Low complexity predominate over residues 207–219 (LPRTVRPTPAARP). The 170-residue stretch at 391-560 (PRPPVVTIMG…SIQAEVLELK (170 aa)) folds into the tr-type G domain. Residues 400–407 (GHVDHGKT), 446–450 (DTPGH), and 500–503 (SKID) each bind GTP.

Belongs to the TRAFAC class translation factor GTPase superfamily. Classic translation factor GTPase family. IF-2 subfamily.

It localises to the cytoplasm. One of the essential components for the initiation of protein synthesis. Protects formylmethionyl-tRNA from spontaneous hydrolysis and promotes its binding to the 30S ribosomal subunits. Also involved in the hydrolysis of GTP during the formation of the 70S ribosomal complex. This Xylella fastidiosa (strain Temecula1 / ATCC 700964) protein is Translation initiation factor IF-2.